The sequence spans 321 residues: Anthranilate phosphoribosyltransferase (321 aa).

Residues Gly-72, Gly-75–Asp-76, Thr-80, Asn-82–Thr-85, Lys-99–Ser-107, and Ser-111 contribute to the 5-phospho-alpha-D-ribose 1-diphosphate site. Residue Gly-72 coordinates anthranilate. Mg(2+) is bound at residue Ser-84. Asn-102 is an anthranilate binding site. Arg-157 is an anthranilate binding site. The Mg(2+) site is built by Asp-216 and Glu-217.

Belongs to the anthranilate phosphoribosyltransferase family. As to quaternary structure, homodimer. It depends on Mg(2+) as a cofactor.

It catalyses the reaction N-(5-phospho-beta-D-ribosyl)anthranilate + diphosphate = 5-phospho-alpha-D-ribose 1-diphosphate + anthranilate. It participates in amino-acid biosynthesis; L-tryptophan biosynthesis; L-tryptophan from chorismate: step 2/5. Its function is as follows. Catalyzes the transfer of the phosphoribosyl group of 5-phosphorylribose-1-pyrophosphate (PRPP) to anthranilate to yield N-(5'-phosphoribosyl)-anthranilate (PRA). This is Anthranilate phosphoribosyltransferase from Methanococcus maripaludis (strain C6 / ATCC BAA-1332).